We begin with the raw amino-acid sequence, 165 residues long: Nucleotide-binding protein Syncc9902_1708 (165 aa).

This sequence belongs to the YajQ family.

In terms of biological role, nucleotide-binding protein. The chain is Nucleotide-binding protein Syncc9902_1708 from Synechococcus sp. (strain CC9902).